A 94-amino-acid chain; its full sequence is DNA-directed RNA polymerase subunit Rpo11 (94 aa).

This sequence belongs to the archaeal Rpo11/eukaryotic RPB11/RPC19 RNA polymerase subunit family. As to quaternary structure, part of the RNA polymerase complex.

It is found in the cytoplasm. It catalyses the reaction RNA(n) + a ribonucleoside 5'-triphosphate = RNA(n+1) + diphosphate. In terms of biological role, DNA-dependent RNA polymerase (RNAP) catalyzes the transcription of DNA into RNA using the four ribonucleoside triphosphates as substrates. This Haloarcula marismortui (strain ATCC 43049 / DSM 3752 / JCM 8966 / VKM B-1809) (Halobacterium marismortui) protein is DNA-directed RNA polymerase subunit Rpo11.